The following is a 194-amino-acid chain: Transmembrane protein 212 (194 aa).

A run of 5 helical transmembrane segments spans residues 11–31 (ILVTLGILSVCSGVIAFFPVF), 44–64 (IACPIWNGALAITTGVLLLLA), 76–96 (ATFTFVILSIMGCPLHFAIAL), 99–119 (ALLGPYCFYSFSGIAGTNYLG), and 148–168 (LQALDLCLSFTLLCTSLTVFI).

Its subcellular location is the membrane. The chain is Transmembrane protein 212 (TMEM212) from Homo sapiens (Human).